The primary structure comprises 118 residues: Small ribosomal subunit protein uS13 (118 aa).

The segment at 92–118 is disordered; sequence RRGLPVRGQRTKTNARTRKGPRKPIKK.

The protein belongs to the universal ribosomal protein uS13 family. Part of the 30S ribosomal subunit. Forms a loose heterodimer with protein S19. Forms two bridges to the 50S subunit in the 70S ribosome.

Functionally, located at the top of the head of the 30S subunit, it contacts several helices of the 16S rRNA. In the 70S ribosome it contacts the 23S rRNA (bridge B1a) and protein L5 of the 50S subunit (bridge B1b), connecting the 2 subunits; these bridges are implicated in subunit movement. Contacts the tRNAs in the A and P-sites. This is Small ribosomal subunit protein uS13 from Yersinia enterocolitica serotype O:8 / biotype 1B (strain NCTC 13174 / 8081).